A 365-amino-acid polypeptide reads, in one-letter code: MAGDMEFKSWGYTQINVQKFCYNWTISNFSFCMGAHQKSITSPVFSLEASKEVAWCLRLYPNGVDEESKDYLSVYLELLSALESPILAKFEFWIINSQGEKYQSRKISNVQCFLQYEHRGFKKFLLRGLLLSHMNWFLPEDQFTICCKVSIVGTVFDMPVQKRTPAIKDPRHMLTDDLGELWENSLFTDCCLLVAGHEFKAHKAILAARSPVFRAMFENEMKESLKNPIEIMDLDLDVFKEMMGFIYTGKAPHLHSHSMACDVLPAADKYGLVGLKVLCEDVLCRNLSVKTAAHTLILADLNSTEKLKSQALDFIAIHACEVSETSEWKSMWKSHPHLVAEAFHSLASAKCSFLEPNVVLESSQL.

An MATH domain is found at 19–149 (KFCYNWTISN…EDQFTICCKV (131 aa)). The 63-residue stretch at 188-250 (TDCCLLVAGH…EMMGFIYTGK (63 aa)) folds into the BTB domain.

The protein belongs to the Tdpoz family.

The polypeptide is TD and POZ domain-containing protein 3 (Mus musculus (Mouse)).